Reading from the N-terminus, the 941-residue chain is Pre-mRNA-processing factor 6 (941 aa).

The tract at residues 1–79 is disordered; it reads MNKKKKPFLG…DEDLNDTNYD (79 aa). The segment covering 39–65 has biased composition (basic and acidic residues); the sequence is DANDPVDDRHAPPGKRTVGDQMKKNQA. Acidic residues predominate over residues 66 to 78; sequence ADDDDEDLNDTNY. Residue Ser-143 is modified to Phosphoserine. Phosphothreonine occurs at positions 180, 266, and 275. Ser-279 bears the Phosphoserine mark. 9 HAT repeats span residues 384–416, 418–444, 445–476, 554–586, 588–620, 622–654, 689–721, 723–755, and 855–887; these read TDIR…LEEP, DARI…ARLE, TYEN…LEEA, NALE…FEKN, GTRE…SKWL, GDVP…LESE, GNIT…IEEQ, ELME…LEEK, and RKIT…FELQ.

As to quaternary structure, identified in the spliceosome B complex. Identified in the spliceosome C complex. Associates with the U5 snRNP particle. Component of the U4/U6-U5 tri-snRNP complex composed of the U4, U6 and U5 snRNAs and at least PRPF3, PRPF4, PRPF6, PRPF8, PRPF31, SNRNP200, TXNL4A, SNRNP40, DDX23, CD2BP2, PPIH, SNU13, EFTUD2, SART1 and USP39, LSm proteins LSm2-8 and Sm proteins. Interacts with ARAF1. Interacts with AR and NR3C1, but not ESR1, independently of the presence of hormones. Interacts with USH1G. Post-translationally, phosphorylated by PRP4K during spliceosome assembly.

It localises to the nucleus. The protein resides in the nucleoplasm. It is found in the nucleus speckle. Functionally, involved in pre-mRNA splicing as component of the U4/U6-U5 tri-snRNP complex, one of the building blocks of the spliceosome. Enhances dihydrotestosterone-induced transactivation activity of AR, as well as dexamethasone-induced transactivation activity of NR3C1, but does not affect estrogen-induced transactivation. This Rattus norvegicus (Rat) protein is Pre-mRNA-processing factor 6 (Prpf6).